We begin with the raw amino-acid sequence, 362 residues long: UDP-galactose transporter homolog 1 (362 aa).

5 helical membrane-spanning segments follow: residues 7–27, 45–65, 111–131, 141–161, and 175–195; these read IFPVLFCAAGIYASFLTWALV, CPNVIAVVQAVAAVCVGYFYM, LTYMLAKSCKMIPVLLVHLII, SVVAVLVSIGVTIFTIGGSKG, and FFQKASGFLLLFLSLFMDGLT. An N-linked (GlcNAc...) asparagine glycan is attached at Asn-196. 4 consecutive transmembrane segments (helical) span residues 234–254, 271–291, 296–316, and 317–337; these read HMMFALNFFVAIWNIAYLLVI, IIVSYLLAYALCGSLGQCFIF, LYGSLVLIMITVTRKMMSMLL, and SIIVFGKTVNATQWLGIVIVF.

The protein belongs to the nucleotide-sugar transporter family. SLC35B subfamily.

The protein resides in the endoplasmic reticulum membrane. Functionally, may be involved in specific transport of UDP-Gal from the cytosol to the Golgi lumen. Involved in the maintenance of optimal conditions for the folding of secretory pathway proteins in the endoplasmic reticulum. The sequence is that of UDP-galactose transporter homolog 1 (HUT1) from Candida glabrata (strain ATCC 2001 / BCRC 20586 / JCM 3761 / NBRC 0622 / NRRL Y-65 / CBS 138) (Yeast).